Consider the following 386-residue polypeptide: Galactokinase (386 aa).

35–38 (EHTD) contacts substrate. 125 to 131 (GAGLSSS) contacts ATP. Residues Ser131 and Glu163 each contribute to the Mg(2+) site. The active-site Proton acceptor is Asp175. Tyr224 provides a ligand contact to substrate.

Belongs to the GHMP kinase family. GalK subfamily.

The protein localises to the cytoplasm. It catalyses the reaction alpha-D-galactose + ATP = alpha-D-galactose 1-phosphate + ADP + H(+). Its pathway is carbohydrate metabolism; galactose metabolism. Functionally, catalyzes the transfer of the gamma-phosphate of ATP to D-galactose to form alpha-D-galactose-1-phosphate (Gal-1-P). The polypeptide is Galactokinase (Vibrio cholerae serotype O1 (strain ATCC 39315 / El Tor Inaba N16961)).